The primary structure comprises 369 residues: UPF0754 membrane protein Aflv_2299 (369 aa).

2 helical membrane passes run 1 to 21 (MGLFLYLLFMIVVGAFIGGMT) and 347 to 367 (YLGALLGGIIGLIQGCITFFV).

It belongs to the UPF0754 family.

The protein resides in the cell membrane. The protein is UPF0754 membrane protein Aflv_2299 of Anoxybacillus flavithermus (strain DSM 21510 / WK1).